The sequence spans 506 residues: Nucleosome assembly protein 1-like 3 (506 aa).

2 disordered regions span residues 1–95 (MAEA…LGTN) and 157–307 (PTEE…KRED). Residues 35-70 (SSSSSSSTSDSSSSSSTSGSSSGSGSSSSSSGSTSS) show a composition bias toward low complexity. Residues 157-178 (PTEEECEWNSEDEEFSSDEEVQ) show a composition bias toward acidic residues. Residues 196 to 296 (PKENPEVKAE…ERLQDSVDLK (101 aa)) show a composition bias toward basic and acidic residues.

This sequence belongs to the nucleosome assembly protein (NAP) family.

Its subcellular location is the nucleus. This Homo sapiens (Human) protein is Nucleosome assembly protein 1-like 3 (NAP1L3).